The following is a 228-amino-acid chain: Probable septum site-determining protein MinC (228 aa).

It belongs to the MinC family. As to quaternary structure, interacts with MinD and FtsZ.

Functionally, cell division inhibitor that blocks the formation of polar Z ring septums. Rapidly oscillates between the poles of the cell to destabilize FtsZ filaments that have formed before they mature into polar Z rings. Prevents FtsZ polymerization. The protein is Probable septum site-determining protein MinC of Pectobacterium atrosepticum (strain SCRI 1043 / ATCC BAA-672) (Erwinia carotovora subsp. atroseptica).